A 212-amino-acid polypeptide reads, in one-letter code: MTQLADLRRTYVLGALSESDVAPDPMSQFKRWFDEAVTAKLPEPNAMSLATVDADGQPSARIVLLKGIDDRGFTFFTNYESRKGLDLAANPRAALLFHWVQLERQVRVEGRVEKVSDDESDAYFATRPLGSRVGAWASAQSREVPGRDVLEQREQEYRSKFGENPPRPPYWGGYRLVPTALEFWQGRPSRLHDRIAYRLQPGTGWQIVRLSP.

Substrate contacts are provided by residues 8–11 (RRTY) and Lys66. Residues 61-66 (RIVLLK), 76-77 (FT), Arg82, Lys83, and Gln105 each bind FMN. Tyr123, Arg127, and Ser131 together coordinate substrate. Residues 140–141 (QS) and Trp184 each bind FMN. 190–192 (RLH) serves as a coordination point for substrate. Position 194 (Arg194) interacts with FMN.

Belongs to the pyridoxamine 5'-phosphate oxidase family. Homodimer. The cofactor is FMN.

It catalyses the reaction pyridoxamine 5'-phosphate + O2 + H2O = pyridoxal 5'-phosphate + H2O2 + NH4(+). It carries out the reaction pyridoxine 5'-phosphate + O2 = pyridoxal 5'-phosphate + H2O2. It participates in cofactor metabolism; pyridoxal 5'-phosphate salvage; pyridoxal 5'-phosphate from pyridoxamine 5'-phosphate: step 1/1. It functions in the pathway cofactor metabolism; pyridoxal 5'-phosphate salvage; pyridoxal 5'-phosphate from pyridoxine 5'-phosphate: step 1/1. Its function is as follows. Catalyzes the oxidation of either pyridoxine 5'-phosphate (PNP) or pyridoxamine 5'-phosphate (PMP) into pyridoxal 5'-phosphate (PLP). This Cupriavidus taiwanensis (strain DSM 17343 / BCRC 17206 / CCUG 44338 / CIP 107171 / LMG 19424 / R1) (Ralstonia taiwanensis (strain LMG 19424)) protein is Pyridoxine/pyridoxamine 5'-phosphate oxidase.